The chain runs to 339 residues: Uricase (339 aa).

Active-site charge relay system residues include Lys-33 and Thr-78. Urate-binding residues include Thr-78, Asp-79, Phe-201, Arg-218, Val-266, Gln-267, and Asn-293. Catalysis depends on His-295, which acts as the Charge relay system. The Microbody targeting signal motif lies at 337-339 (SHL).

The protein belongs to the uricase family.

Its subcellular location is the peroxisome. It catalyses the reaction urate + O2 + H2O = 5-hydroxyisourate + H2O2. It functions in the pathway purine metabolism; urate degradation; (S)-allantoin from urate: step 1/3. Catalyzes the oxidation of uric acid to 5-hydroxyisourate, which is further processed to form (S)-allantoin. The polypeptide is Uricase (Uro) (Drosophila subobscura (Fruit fly)).